The sequence spans 264 residues: tRNA pseudouridine synthase A (264 aa).

The active-site Nucleophile is the Asp52. Position 110 (Tyr110) interacts with substrate.

The protein belongs to the tRNA pseudouridine synthase TruA family. In terms of assembly, homodimer.

It catalyses the reaction uridine(38/39/40) in tRNA = pseudouridine(38/39/40) in tRNA. In terms of biological role, formation of pseudouridine at positions 38, 39 and 40 in the anticodon stem and loop of transfer RNAs. This Wigglesworthia glossinidia brevipalpis protein is tRNA pseudouridine synthase A.